A 369-amino-acid polypeptide reads, in one-letter code: Phospho-N-acetylmuramoyl-pentapeptide-transferase (369 aa).

10 helical membrane passes run 2–22 (IAIL…TPFF), 54–74 (GLVI…FLGL), 80–100 (GLLV…DDIL), 113–133 (FYKV…TFLV), 158–178 (ALFS…LLWI), 195–215 (LDGL…VIGF), 241–261 (PLDM…FLWW), 268–288 (IMMG…LSIL), 293–313 (LLFL…ILQI), and 347–367 (FWII…ADWL).

It belongs to the glycosyltransferase 4 family. MraY subfamily. Mg(2+) serves as cofactor.

The protein resides in the cell membrane. The enzyme catalyses UDP-N-acetyl-alpha-D-muramoyl-L-alanyl-gamma-D-glutamyl-meso-2,6-diaminopimeloyl-D-alanyl-D-alanine + di-trans,octa-cis-undecaprenyl phosphate = di-trans,octa-cis-undecaprenyl diphospho-N-acetyl-alpha-D-muramoyl-L-alanyl-D-glutamyl-meso-2,6-diaminopimeloyl-D-alanyl-D-alanine + UMP. The protein operates within cell wall biogenesis; peptidoglycan biosynthesis. Functionally, catalyzes the initial step of the lipid cycle reactions in the biosynthesis of the cell wall peptidoglycan: transfers peptidoglycan precursor phospho-MurNAc-pentapeptide from UDP-MurNAc-pentapeptide onto the lipid carrier undecaprenyl phosphate, yielding undecaprenyl-pyrophosphoryl-MurNAc-pentapeptide, known as lipid I. The chain is Phospho-N-acetylmuramoyl-pentapeptide-transferase from Tropheryma whipplei (strain TW08/27) (Whipple's bacillus).